Reading from the N-terminus, the 187-residue chain is MDQPKYFSSLLGFLLKKEYEKDEDCKSLETLKEMVFSEQDDVTLELIEFTYNKCFEIIQKASYSDMQISTFENIVKESDFTTVQQECLNKFWKVNKKKIHEIIYKTTRFNNSLQKISWRIDVKTKSKEISEINEPVSIVELKLKNTNTNNNNNNKNDLIRFEMDKNQLEETLQQINSIQKHLQAKSL.

The COMM domain maps to 112–186 (SLQKISWRID…SIQKHLQAKS (75 aa)).

It belongs to the COMM domain-containing protein 1 family. Component of the commander complex consisting of the CCC subcomplex and the retriever subcomplex.

Its function is as follows. Scaffold protein in the commander complex that is essential for endosomal recycling of transmembrane cargos; the commander complex is composed of the CCC subcomplex and the retriever subcomplex. This chain is COMM domain-containing protein 1 (commd1), found in Dictyostelium discoideum (Social amoeba).